The following is a 332-amino-acid chain: Glycerol-3-phosphate dehydrogenase [NAD(P)+] (332 aa).

NADPH is bound by residues Trp-15, Arg-35, and Lys-108. Sn-glycerol 3-phosphate-binding residues include Lys-108, Gly-137, and Ser-139. Ala-141 is an NADPH binding site. The sn-glycerol 3-phosphate site is built by Lys-192, Asp-245, Ser-255, Arg-256, and Asn-257. The active-site Proton acceptor is the Lys-192. Position 256 (Arg-256) interacts with NADPH. NADPH-binding residues include Leu-278 and Glu-280.

It belongs to the NAD-dependent glycerol-3-phosphate dehydrogenase family.

The protein resides in the cytoplasm. It carries out the reaction sn-glycerol 3-phosphate + NAD(+) = dihydroxyacetone phosphate + NADH + H(+). The catalysed reaction is sn-glycerol 3-phosphate + NADP(+) = dihydroxyacetone phosphate + NADPH + H(+). It participates in membrane lipid metabolism; glycerophospholipid metabolism. In terms of biological role, catalyzes the reduction of the glycolytic intermediate dihydroxyacetone phosphate (DHAP) to sn-glycerol 3-phosphate (G3P), the key precursor for phospholipid synthesis. This is Glycerol-3-phosphate dehydrogenase [NAD(P)+] from Methylobacterium radiotolerans (strain ATCC 27329 / DSM 1819 / JCM 2831 / NBRC 15690 / NCIMB 10815 / 0-1).